The primary structure comprises 104 residues: Large ribosomal subunit protein bL21 (104 aa).

It belongs to the bacterial ribosomal protein bL21 family. Part of the 50S ribosomal subunit. Contacts protein L20.

Functionally, this protein binds to 23S rRNA in the presence of protein L20. The polypeptide is Large ribosomal subunit protein bL21 (Salinispora tropica (strain ATCC BAA-916 / DSM 44818 / JCM 13857 / NBRC 105044 / CNB-440)).